We begin with the raw amino-acid sequence, 423 residues long: Glutamyl-tRNA(Gln) amidotransferase subunit A (423 aa).

Residues 1–20 form a disordered region; the sequence is MSHNAFITEETIEPTDDGPL. Residues 10 to 19 show a composition bias toward acidic residues; it reads ETIEPTDDGP. Catalysis depends on charge relay system residues lysine 28 and serine 103. Residues 75-108 form a disordered region; sequence EFGMGTTTETSAFGPTENPAAEGRVPGGSSGGSA. Serine 127 functions as the Acyl-ester intermediate in the catalytic mechanism. Residues 183 to 206 form a disordered region; it reads DERDGTTREPPAGQPTYADAADGD.

It belongs to the amidase family. GatA subfamily. Heterotrimer of A, B and C subunits.

The enzyme catalyses L-glutamyl-tRNA(Gln) + L-glutamine + ATP + H2O = L-glutaminyl-tRNA(Gln) + L-glutamate + ADP + phosphate + H(+). Its function is as follows. Allows the formation of correctly charged Gln-tRNA(Gln) through the transamidation of misacylated Glu-tRNA(Gln) in organisms which lack glutaminyl-tRNA synthetase. The reaction takes place in the presence of glutamine and ATP through an activated gamma-phospho-Glu-tRNA(Gln). This Natronomonas pharaonis (strain ATCC 35678 / DSM 2160 / CIP 103997 / JCM 8858 / NBRC 14720 / NCIMB 2260 / Gabara) (Halobacterium pharaonis) protein is Glutamyl-tRNA(Gln) amidotransferase subunit A.